Here is a 431-residue protein sequence, read N- to C-terminus: Helix-loop-helix protein 11 (431 aa).

The tract at residues 88–109 (LANRSLSQPAPLSPTSLDPDRR) is disordered. Positions 91 to 103 (RSLSQPAPLSPTS) are enriched in polar residues. One can recognise a bHLH domain in the interval 112 to 163 (MRRQIANCNERRRMQSINAGFLALRALLPRKEGEKLSKAAILQQTADMVHQL). Polar residues-rich tracts occupy residues 226-241 (TTTS…PRSN) and 248-257 (LPSSYASSAL). The interval 226-311 (TTTSSQASSP…PPPTLPSLET (86 aa)) is disordered. Positions 274–291 (TTSTPLSLLTLNGSPTSS) are enriched in low complexity.

As to expression, expressed in the pharynx, nerve cords, the H-shaped excretory cell, vulva muscles, and the anal depressor (at protein level). Expressed in the intestine (at protein level). In males, it is also expressed in the spicules and hyp7 cells of the hypodermis (at protein level).

It is found in the nucleus. Transcriptional regulator. Component of a feedback loop involving atfs-1, atgl-1 and hlh-11. Binds to the promoter of the atgl-1 lipase to negatively regulate the expression of atgl-1, and thereby promoting fat oxidation in response to mitochondrial stress and mitochondrial respiration in the intestine. In addition, functions with atfs-1 to maintain lifespan. May have a role in fertility and in positively regulating body size. The chain is Helix-loop-helix protein 11 from Caenorhabditis elegans.